The chain runs to 78 residues: Acyl carrier protein (78 aa).

One can recognise a Carrier domain in the interval 2–77; the sequence is STIEERVKKI…AAIDYINGHQ (76 aa). Ser-37 carries the post-translational modification O-(pantetheine 4'-phosphoryl)serine.

Belongs to the acyl carrier protein (ACP) family. Post-translationally, 4'-phosphopantetheine is transferred from CoA to a specific serine of apo-ACP by AcpS. This modification is essential for activity because fatty acids are bound in thioester linkage to the sulfhydryl of the prosthetic group.

It localises to the cytoplasm. Its pathway is lipid metabolism; fatty acid biosynthesis. In terms of biological role, carrier of the growing fatty acid chain in fatty acid biosynthesis. This Shigella flexneri protein is Acyl carrier protein.